The sequence spans 156 residues: C-type lectin lectoxin-Lei1 (156 aa).

A signal peptide spans Met1 to Ala23. Intrachain disulfides connect Cys27–Cys38, Cys55–Cys154, and Cys129–Cys146. The C-type lectin domain maps to Phe34–Lys155. N-linked (GlcNAc...) asparagine glycans are attached at residues Asn60 and Asn99. The short motif at Lys119 to Asn121 is the Sugar-binding element. Asn142 serves as a coordination point for Ca(2+).

The protein belongs to the true venom lectin family. In terms of tissue distribution, expressed by the venom gland.

The protein resides in the secreted. Its function is as follows. Lectin which recognizes specific carbohydrate structures and agglutinates a variety of animal cells by binding to cell-surface glycoproteins and glycolipids. May be a calcium-dependent lectin. This is C-type lectin lectoxin-Lei1 from Leioheterodon madagascariensis (Malagasy giant hognose snake).